Reading from the N-terminus, the 354-residue chain is MGNKTSRKSKEKSGRNYTTELRSYEAACKEDMEIQSFDTRMQARTSHVISTLATGVEVRSLSFDSLKAVIGSLLDMNQEVAKVILDCKKDIWKNQEMFEFVEAYFETSLKTLDFFNALKRGLQGVQINHLFILDGNGYKKTLQELKRFKDADRPFDQDFFKMFQSVYNQQKWMLDKLQRRQNKLDKKLKRIRTWRKLSSIIFMATFATLVICSVLAATMAAPHVAAALAAATPPVGSMGKWIDSLWKNYENEIKGQTEVFSSMYVGTYVAVQDLNNIKDLIKRLDTEIRGMVKNAEYAGELGPVKIGINAIKTQLEVFKKNVEELEIQADMCSTDIRRARTVILQRIINATCST.

Transmembrane regions (helical) follow at residues 200 to 220 (IIFMATFATLVICSVLAATMA) and 222 to 242 (PHVAAALAAATPPVGSMGKWI). Positions 270 to 341 (AVQDLNNIKD…CSTDIRRART (72 aa)) form a coiled coil.

Belongs to the UPF0496 family.

It is found in the membrane. The polypeptide is UPF0496 protein At4g34330 (Arabidopsis thaliana (Mouse-ear cress)).